A 467-amino-acid polypeptide reads, in one-letter code: Glutamate--tRNA ligase 2 (467 aa).

The 'HIGH' region signature appears at 18-28 (PSPTGYLHVGG). Residues 238 to 242 (PLSKR) carry the 'KMSKS' region motif. Lys241 provides a ligand contact to ATP.

Belongs to the class-I aminoacyl-tRNA synthetase family. Glutamate--tRNA ligase type 1 subfamily. As to quaternary structure, monomer.

The protein localises to the cytoplasm. It carries out the reaction tRNA(Glu) + L-glutamate + ATP = L-glutamyl-tRNA(Glu) + AMP + diphosphate. In terms of biological role, catalyzes the attachment of glutamate to tRNA(Glu) in a two-step reaction: glutamate is first activated by ATP to form Glu-AMP and then transferred to the acceptor end of tRNA(Glu). This is Glutamate--tRNA ligase 2 from Fervidobacterium nodosum (strain ATCC 35602 / DSM 5306 / Rt17-B1).